A 1113-amino-acid polypeptide reads, in one-letter code: Receptor-type guanylate cyclase gcy-18 (1113 aa).

Positions 1–18 are cleaved as a signal peptide; sequence MLKTLLFILIFFNIPIIA. Over 19–499 the chain is Extracellular; the sequence is IEEIPDIKEN…RGQRCSYLLE (481 aa). 3 N-linked (GlcNAc...) asparagine glycosylation sites follow: N72, N369, and N456. The helical transmembrane segment at 500–520 threads the bilayer; sequence ISVGSLIILLILISVVFFFLF. The Cytoplasmic segment spans residues 521–1113; it reads RYCENKQLEK…TNYIQNVEGV (593 aa). A Protein kinase domain is found at 543 to 848; that stretch reads IDEEQVKSMM…RVRLNTEMVL (306 aa). Residues 853 to 884 adopt a coiled-coil conformation; it reads SLVDQMMKMMEQYANNLEKLVAERTGMLEEAN. The Guanylate cyclase domain maps to 918-1048; that stretch reads TILFSDIVGF…DTVNVSSRME (131 aa). Residues D923, I924, and D967 each contribute to the Mg(2+) site.

The protein belongs to the adenylyl cyclase class-4/guanylyl cyclase family. As to expression, expressed specifically in AFD sensory neurons.

It is found in the cell membrane. The protein localises to the cell projection. The protein resides in the cilium. The catalysed reaction is GTP = 3',5'-cyclic GMP + diphosphate. Its function is as follows. Guanylate cyclase involved in the production of the second messenger cGMP. Regulates thermotaxis responses in AFD sensory neurons. May regulate AFD neuronal activity such as calcium responses to temperature gradients. This is Receptor-type guanylate cyclase gcy-18 from Caenorhabditis elegans.